Reading from the N-terminus, the 260-residue chain is Methyl-coenzyme M reductase I subunit gamma (260 aa).

Arginine 123 contributes to the coenzyme M binding site.

The protein belongs to the methyl-coenzyme M reductase gamma subunit family. In terms of assembly, MCR is a hexamer of two alpha, two beta, and two gamma chains, forming a dimer of heterotrimers. The cofactor is coenzyme F430.

It localises to the cytoplasm. The catalysed reaction is coenzyme B + methyl-coenzyme M = methane + coenzyme M-coenzyme B heterodisulfide. It functions in the pathway one-carbon metabolism; methyl-coenzyme M reduction; methane from methyl-coenzyme M: step 1/1. In terms of biological role, component of the methyl-coenzyme M reductase (MCR) I that catalyzes the reductive cleavage of methyl-coenzyme M (CoM-S-CH3 or 2-(methylthio)ethanesulfonate) using coenzyme B (CoB or 7-mercaptoheptanoylthreonine phosphate) as reductant which results in the production of methane and the mixed heterodisulfide of CoB and CoM (CoM-S-S-CoB). This is the final step in methanogenesis. The chain is Methyl-coenzyme M reductase I subunit gamma (mcrG) from Methanocaldococcus jannaschii (strain ATCC 43067 / DSM 2661 / JAL-1 / JCM 10045 / NBRC 100440) (Methanococcus jannaschii).